The following is a 457-amino-acid chain: Cysteine--tRNA ligase (457 aa).

Cys-29 provides a ligand contact to Zn(2+). The short motif at 31–41 is the 'HIGH' region element; the sequence is PTVYDNPHIGN. 3 residues coordinate Zn(2+): Cys-214, His-239, and Glu-243. The 'KMSKS' region motif lies at 272–276; the sequence is KMSKS. Lys-275 lines the ATP pocket.

It belongs to the class-I aminoacyl-tRNA synthetase family. In terms of assembly, monomer. Requires Zn(2+) as cofactor.

The protein localises to the cytoplasm. It catalyses the reaction tRNA(Cys) + L-cysteine + ATP = L-cysteinyl-tRNA(Cys) + AMP + diphosphate. This Rickettsia prowazekii (strain Madrid E) protein is Cysteine--tRNA ligase (cysS).